The primary structure comprises 704 residues: Neutral ceramidase (704 aa).

A signal peptide spans 1 to 23 (MAISKIAFLALIALSGLCGLASA). Asparagine 230 carries N-linked (GlcNAc...) asparagine glycosylation. The active-site Nucleophile is serine 276. 3 N-linked (GlcNAc...) asparagine glycosylation sites follow: asparagine 362, asparagine 550, and asparagine 598.

It belongs to the neutral ceramidase family. Post-translationally, N-glycosylated.

It is found in the secreted. It catalyses the reaction an N-acylsphing-4-enine + H2O = sphing-4-enine + a fatty acid. Its function is as follows. Hydrolyzes the sphingolipid ceramide into sphingosine and free fatty acid at an optimal pH of 6.5-7.5. Acts as a key regulator of sphingolipid signaling metabolites by generating sphingosine at the cell surface. The polypeptide is Neutral ceramidase (CDase) (Drosophila pseudoobscura pseudoobscura (Fruit fly)).